Consider the following 470-residue polypeptide: MSTNEGSLWGGRFADGPADALAALSKSTHFDWVLAPYDIAASKAHARVLFSAGLLTEDQRDGLLAGLDSLASDVADGSFAPLVTDEDVHGALERGLIDRVGAELGGRLRAGRSRNDQVATLFRAWLRDAIRRVADGVLGVVSALATQAAAHPTAIMPGKTHLQSAQPVLLAHHLLAHAHPLLRDVDRLADFDKRAAVSPYGAGALAGSSLGLDPDAIAAELGFDSAADNSIDATAARDFAAEAAFVLAMIGVDLSRLAEDIILWSTTEFGYVTLHDAWSTGSSIMPQKKNPDIAELARGKSGRLIGNLTGLLATLKAQPLAYNRDLQEDKEPVFDSVAQLELLLPAVAGLVSTLSFDVDRMAELAPLGYTLATDVAEWLVRRGVPFRVAHEAAGAAVRAAEARGVGLEDLEDAELTGIHPELTGDVREVLTIEGSVNSRDARGGTAPVQVAKQLNVVRDTADRLRLRLRT.

This sequence belongs to the lyase 1 family. Argininosuccinate lyase subfamily.

The protein resides in the cytoplasm. It catalyses the reaction 2-(N(omega)-L-arginino)succinate = fumarate + L-arginine. Its pathway is amino-acid biosynthesis; L-arginine biosynthesis; L-arginine from L-ornithine and carbamoyl phosphate: step 3/3. The sequence is that of Argininosuccinate lyase from Mycobacterium sp. (strain MCS).